The sequence spans 189 residues: UPF0301 protein CTA_0231 (189 aa).

Belongs to the UPF0301 (AlgH) family.

In Chlamydia trachomatis serovar A (strain ATCC VR-571B / DSM 19440 / HAR-13), this protein is UPF0301 protein CTA_0231.